Consider the following 390-residue polypeptide: GTPase Obg (390 aa).

Residues 1-159 (MKFVDEASIL…RDLLLELMLL (159 aa)) form the Obg domain. The interval 127-147 (NTRFKSSVNRTPRQKTNGTPG) is disordered. Residues 129-145 (RFKSSVNRTPRQKTNGT) show a composition bias toward polar residues. An OBG-type G domain is found at 160 to 333 (ADVGMLGMPN…LCWDVMTFII (174 aa)). GTP contacts are provided by residues 166-173 (GMPNAGKS), 191-195 (FTTLV), 213-216 (DIPG), 283-286 (NKID), and 314-316 (SAA). Mg(2+) is bound by residues S173 and T193.

Belongs to the TRAFAC class OBG-HflX-like GTPase superfamily. OBG GTPase family. In terms of assembly, monomer. It depends on Mg(2+) as a cofactor.

Its subcellular location is the cytoplasm. An essential GTPase which binds GTP, GDP and possibly (p)ppGpp with moderate affinity, with high nucleotide exchange rates and a fairly low GTP hydrolysis rate. Plays a role in control of the cell cycle, stress response, ribosome biogenesis and in those bacteria that undergo differentiation, in morphogenesis control. The protein is GTPase Obg of Salmonella gallinarum (strain 287/91 / NCTC 13346).